The following is a 475-amino-acid chain: Putative poly(A) polymerase catalytic subunit (475 aa).

The protein belongs to the poxviridae poly(A) polymerase catalytic subunit family. Highly divergent.

It localises to the virion. It catalyses the reaction RNA(n) + ATP = RNA(n)-3'-adenine ribonucleotide + diphosphate. Its function is as follows. Polymerase that creates the 3'-poly(A) tail of mRNA's. The protein is Putative poly(A) polymerase catalytic subunit of Ornithodoros (relapsing fever ticks).